Consider the following 527-residue polypeptide: Endogenous retrovirus group FC1 member 1 Env polyprotein (527 aa).

The tract at residues methionine 1–tryptophan 411 is surface protein. The short motif at cysteine 280–cysteine 283 is the CXXC element. Residues alanine 412–leucine 432 are fusion peptide. The segment at alanine 412–serine 527 is transmembrane protein. The CKS-17 signature appears at alanine 477 to threonine 493. Cysteine 494 and cysteine 501 form a disulfide bridge. A CX6CC motif is present at residues cysteine 494–cysteine 502.

The protein belongs to the gamma type-C retroviral envelope protein family. HERV class-I F(c)2 env subfamily. Post-translationally, the CXXC motif is highly conserved across a broad range of retroviral envelope proteins. It is thought to participate in the formation of a labile disulfide bond possibly with the CX6CC motif present in the transmembrane domain. As to expression, low expression in skin and testis.

It is found in the virion. Its function is as follows. Retroviral envelope proteins mediate receptor recognition and membrane fusion during early infection. Endogenous envelope proteins may have kept, lost or modified their original function during evolution. This endogenous envelope protein has lost its original fusogenic properties. The protein is Endogenous retrovirus group FC1 member 1 Env polyprotein (ERVFC1-1) of Homo sapiens (Human).